The primary structure comprises 322 residues: NADH-quinone oxidoreductase subunit H (322 aa).

8 consecutive transmembrane segments (helical) span residues 12 to 32, 79 to 99, 111 to 131, 151 to 171, 183 to 203, 234 to 254, 262 to 282, and 301 to 321; these read IGKA…MSFI, IFVL…AVVP, VGLL…LFAG, LSYE…TGSF, LWNV…GVAV, FFVG…TLFF, LPPF…FILL, and VCLP…LMNA.

It belongs to the complex I subunit 1 family. As to quaternary structure, NDH-1 is composed of 14 different subunits. Subunits NuoA, H, J, K, L, M, N constitute the membrane sector of the complex.

The protein localises to the cell inner membrane. It catalyses the reaction a quinone + NADH + 5 H(+)(in) = a quinol + NAD(+) + 4 H(+)(out). Functionally, NDH-1 shuttles electrons from NADH, via FMN and iron-sulfur (Fe-S) centers, to quinones in the respiratory chain. The immediate electron acceptor for the enzyme in this species is believed to be ubiquinone. Couples the redox reaction to proton translocation (for every two electrons transferred, four hydrogen ions are translocated across the cytoplasmic membrane), and thus conserves the redox energy in a proton gradient. This subunit may bind ubiquinone. The sequence is that of NADH-quinone oxidoreductase subunit H from Aeromonas hydrophila subsp. hydrophila (strain ATCC 7966 / DSM 30187 / BCRC 13018 / CCUG 14551 / JCM 1027 / KCTC 2358 / NCIMB 9240 / NCTC 8049).